A 227-amino-acid chain; its full sequence is uncharacterized protein (227 aa).

7 consecutive transmembrane segments (helical) span residues 15–34 (FIAA…FLIY), 55–77 (TFLF…ASGV), 92–114 (AFSM…YSLL), 121–140 (FPGE…TSLL), 145–167 (LVFL…VNYS), 180–202 (PLYI…FLPL), and 206–224 (FAIY…YRVL).

It localises to the cell membrane. This is an uncharacterized protein from Archaeoglobus fulgidus (strain ATCC 49558 / DSM 4304 / JCM 9628 / NBRC 100126 / VC-16).